Reading from the N-terminus, the 313-residue chain is 3'-5' exoribonuclease YhaM (313 aa).

The OB DNA-binding region spans 22–90 (SSVKGTASNG…QLKIRQIRQA (69 aa)). One can recognise an HD domain in the interval 163-279 (HVVSMLRLAK…LHQIDLMDAS (117 aa)).

This sequence belongs to the YhaM family.

Shows a 3'-5' exoribonuclease activity. This is 3'-5' exoribonuclease YhaM from Listeria innocua serovar 6a (strain ATCC BAA-680 / CLIP 11262).